A 385-amino-acid polypeptide reads, in one-letter code: MKKYTLIATAPMGIEAVVAKEVRDLGYECKVDNGKVIFEGDALAICRANLWLRTADRIKVQVASFKAKTFDELFEKTKAINWRSFIPENGKFPVIGKSVKSTLASVPDCQRIVKKAIVEKLKLQSGKANDWIEETGAEYKVEISLLKDQALITLDSSGTGLHKRGYRVDQGGAPIKETLAAALVQLTNWTPDRPFVDPFCGSGTIAIEAALIGQNIAPGFNRDFVSEDWEWIGKDLWNKARLEVEEKANYDQPLTIFASDIDHRMVQIAKENAEEAGLGDLIQFKQMQVKDFTTNLEFGVIVGNPPYGERLGEKKAVEQMYKEMGQAFEPLDTWSVYMLTSNENFEEAYGRKATKKRKLFNGFIKTDYYQYWSKVRPQRKKTENA.

Residues 44-156 (AICRANLWLR…KDQALITLDS (113 aa)) form the THUMP domain.

It belongs to the methyltransferase superfamily. As to quaternary structure, interacts with the RNA polymerase core.

This Bacillus subtilis (strain 168) protein is Putative RNA methyltransferase YpsC (ypsC).